The sequence spans 1465 residues: Vacuolar heme ABC transmembrane exporter abc3 (1465 aa).

The Extracellular portion of the chain corresponds to 1–8 (MITANKGL). The helical transmembrane segment at 9-29 (SLVLLIPNLFALVSGGLQYVF) threads the bilayer. The Cytoplasmic portion of the chain corresponds to 30-42 (DVRRRIFRPHFSQ). The chain crosses the membrane as a helical span at residues 43–63 (FWTIWMKFFSIALVIITQIYV). Over 64 to 69 (GYKTKN) the chain is Extracellular. A helical membrane pass occupies residues 70–90 (IGWNFFSVVTYCFVLFLQFAE). Over 91-97 (QSTLRVP) the chain is Cytoplasmic. Residues 98–118 (MASLLIFWLLKVVTSLLILLF) form a helical membrane-spanning segment. Over 119-129 (SPYIAITSMAR) the chain is Extracellular. Residues 130–150 (LLTLITLFCSLVCFISEVYVP) traverse the membrane as a helical segment. 151 to 152 (PC) provides a ligand contact to heme. Residues 151 to 235 (PCNRVWYSDD…IYHSKNKRRS (85 aa)) lie on the Cytoplasmic side of the membrane. The helical transmembrane segment at 236–256 (LFLWKLLFFNHWKLVALITIT) threads the bilayer. The 290-residue stretch at 250–539 (VALITITKLI…LPTVISSLLE (290 aa)) folds into the ABC transmembrane type-1 1 domain. Residues 257–291 (KLIQDVLAFVQPTLIQKTILFISSYTSPNPESPSR) lie on the Extracellular side of the membrane. A helical transmembrane segment spans residues 292–312 (GFIIAILVLVANFLQTLLLQQ). The Cytoplasmic portion of the chain corresponds to 313–362 (YNQLIMLLGMRWKTELLASIYRKSLLLSSSARQNRSIGDIINYMAVDTQK). Residues 363 to 383 (ISDLPIYLFIIVSGPFQIALA) traverse the membrane as a helical segment. At 384 to 394 (LSNLYHLMGYS) the chain is on the extracellular side. The helical transmembrane segment at 395–415 (AFTGVAASVILFPCNIIVANV) threads the bilayer. Topologically, residues 416–480 (YKKFQSILMK…KIGFITAIGD (65 aa)) are cytoplasmic. Residues 481–501 (FAWIFTTIIVTTVAFGAFIIF) traverse the membrane as a helical segment. Residues 502-511 (HGKTQALTAD) are Extracellular-facing. The chain crosses the membrane as a helical span at residues 512 to 532 (IVFPAVSLFNLLQFPLAMLPT). At 533–899 (VISSLLEASV…VYWMYFKSCS (367 aa)) the chain is on the cytoplasmic side. In terms of domain architecture, ABC transporter 1 spans 575 to 804 (LEIKSGTFSW…TNSELKQQLS (230 aa)). 614 to 621 (GKVGAGKS) is a binding site for ATP. Disordered regions lie at residues 805–824 (EFND…SYPS) and 840–869 (TYSS…TEDD). Residues 900 to 920 (IGLILLYFFFIISGIMMNVAT) form a helical membrane-spanning segment. The 287-residue stretch at 903–1189 (ILLYFFFIIS…IVQQSVDAEN (287 aa)) folds into the ABC transmembrane type-1 2 domain. Over 921 to 939 (NVWLKHWSEENGKSSSELN) the chain is Extracellular. Residues 940 to 960 (PSPYFYLGIYLFFGFLSCAFI) form a helical membrane-spanning segment. Residues 961 to 1033 (SSSSLTMTVL…FFFRNSIQVL (73 aa)) are Cytoplasmic-facing. A helical membrane pass occupies residues 1034 to 1054 (FILGVICYSAPLSLLLIVPLF). The Extracellular segment spans residues 1055–1465 (FLYLYNRAYY…YSLAKESGLI (411 aa)). An ABC transporter 2 domain is found at 1226–1460 (VSFNHYSAKY…KDSMFYSLAK (235 aa)). An ATP-binding site is contributed by 1260-1267 (GRTGAGKS).

It belongs to the ABC transporter superfamily.

The protein localises to the vacuole membrane. Functionally, iron-regulated vacuolar transporter that mobilizes stored heme from the vacuole to the cytosol in response to iron deficiency. This chain is Vacuolar heme ABC transmembrane exporter abc3, found in Schizosaccharomyces pombe (strain 972 / ATCC 24843) (Fission yeast).